We begin with the raw amino-acid sequence, 81 residues long: Conotoxin Im6.1 (81 aa).

The signal sequence occupies residues 1-20; sequence MSKLGVVLFTLLLLVPLVTP. A propeptide spanning residues 21 to 47 is cleaved from the precursor; sequence ERDGGKWTMLAKNKKAMKRNLMDFITR. 3 cysteine pairs are disulfide-bonded: Cys-49–Cys-61, Cys-54–Cys-67, and Cys-60–Cys-76.

Belongs to the conotoxin M superfamily. As to expression, expressed by the venom duct.

It localises to the secreted. This chain is Conotoxin Im6.1, found in Conus imperialis (Imperial cone).